Reading from the N-terminus, the 607-residue chain is uncharacterized protein (607 aa).

A DNA-binding region (zn(2)-C6 fungal-type) is located at residues 16-44; the sequence is CTVCRKRKLKCDGNKPCGRCIRLNTPKEC.

The protein resides in the nucleus. This is an uncharacterized protein from Saccharomyces cerevisiae (strain ATCC 204508 / S288c) (Baker's yeast).